The sequence spans 275 residues: Diaminopimelate epimerase (275 aa).

Substrate is bound by residues asparagine 20 and asparagine 63. The active-site Proton donor is the cysteine 72. Substrate contacts are provided by residues 73–74 (GN), asparagine 179, and 197–198 (ER). Residue cysteine 207 is the Proton acceptor of the active site. Residue 208–209 (GT) participates in substrate binding.

The protein belongs to the diaminopimelate epimerase family. Homodimer.

The protein localises to the cytoplasm. The catalysed reaction is (2S,6S)-2,6-diaminopimelate = meso-2,6-diaminopimelate. Its pathway is amino-acid biosynthesis; L-lysine biosynthesis via DAP pathway; DL-2,6-diaminopimelate from LL-2,6-diaminopimelate: step 1/1. Functionally, catalyzes the stereoinversion of LL-2,6-diaminopimelate (L,L-DAP) to meso-diaminopimelate (meso-DAP), a precursor of L-lysine and an essential component of the bacterial peptidoglycan. This is Diaminopimelate epimerase from Chlamydia trachomatis serovar A (strain ATCC VR-571B / DSM 19440 / HAR-13).